The following is a 60-amino-acid chain: Conotoxin PnMRCL-022 (60 aa).

The N-terminal stretch at 1–22 (MRCLPVFVILLLLIASTPSVNA) is a signal peptide. A propeptide spanning residues 23–45 (RPKTKDLASFHDNAKRTQHIFWS) is cleaved from the precursor.

The protein belongs to the conotoxin T superfamily. In terms of processing, contains 2 disulfide bonds that can be either 'C1-C3, C2-C4' or 'C1-C4, C2-C3', since these disulfide connectivities have been observed for conotoxins with cysteine framework V (for examples, see AC P0DQQ7 and AC P81755). As to expression, expressed by the venom duct.

Its subcellular location is the secreted. This is Conotoxin PnMRCL-022 from Conus pennaceus (Feathered cone).